Consider the following 521-residue polypeptide: Glucose-1-phosphate adenylyltransferase large subunit 3, chloroplastic (521 aa).

A chloroplast-targeting transit peptide spans 1 to 61 (MDSCCNFSLG…RKLRPGVAYA (61 aa)).

It belongs to the bacterial/plant glucose-1-phosphate adenylyltransferase family. As to quaternary structure, heterotetramer. In terms of tissue distribution, probably are expressed in roots, flowers and/or seeds.

It localises to the plastid. The protein resides in the chloroplast. The enzyme catalyses alpha-D-glucose 1-phosphate + ATP + H(+) = ADP-alpha-D-glucose + diphosphate. It participates in glycan biosynthesis; starch biosynthesis. Its activity is regulated as follows. Activated by 3'phosphoglycerate, inhibited by orthophosphate. Allosteric regulation. In terms of biological role, this protein plays a role in synthesis of starch. It catalyzes the synthesis of the activated glycosyl donor, ADP-glucose from Glc-1-P and ATP. In Arabidopsis thaliana (Mouse-ear cress), this protein is Glucose-1-phosphate adenylyltransferase large subunit 3, chloroplastic (APL3).